The sequence spans 2291 residues: Protein Ycf2 (2291 aa).

1645 to 1652 (GSIGTGRS) is an ATP binding site.

The protein belongs to the Ycf2 family.

The protein resides in the plastid. Its subcellular location is the chloroplast stroma. In terms of biological role, probable ATPase of unknown function. Its presence in a non-photosynthetic plant (Epifagus virginiana) and experiments in tobacco indicate that it has an essential function which is probably not related to photosynthesis. The protein is Protein Ycf2 of Olimarabidopsis pumila (Dwarf rocket).